We begin with the raw amino-acid sequence, 279 residues long: Large ribosomal subunit protein uL2 (279 aa).

Disordered regions lie at residues 29–49 (PVKQ…NGRV) and 202–279 (NASI…KKKG). A compositionally biased stretch (low complexity) spans 36–49 (GKSSSGGRNNNGRV). Residues 209–220 (GRSRWLGRRPHN) are compositionally biased toward basic residues.

Belongs to the universal ribosomal protein uL2 family. Part of the 50S ribosomal subunit. Forms a bridge to the 30S subunit in the 70S ribosome.

Its function is as follows. One of the primary rRNA binding proteins. Required for association of the 30S and 50S subunits to form the 70S ribosome, for tRNA binding and peptide bond formation. It has been suggested to have peptidyltransferase activity; this is somewhat controversial. Makes several contacts with the 16S rRNA in the 70S ribosome. This is Large ribosomal subunit protein uL2 from Beijerinckia indica subsp. indica (strain ATCC 9039 / DSM 1715 / NCIMB 8712).